Consider the following 467-residue polypeptide: Glutamate--tRNA ligase (467 aa).

Residues 9–19 carry the 'HIGH' region motif; it reads PSPTGYLHIGG. The 'KMSKS' region signature appears at 237-241; the sequence is KLSKR. Residue Lys-240 coordinates ATP.

It belongs to the class-I aminoacyl-tRNA synthetase family. Glutamate--tRNA ligase type 1 subfamily. In terms of assembly, monomer.

It is found in the cytoplasm. It catalyses the reaction tRNA(Glu) + L-glutamate + ATP = L-glutamyl-tRNA(Glu) + AMP + diphosphate. Functionally, catalyzes the attachment of glutamate to tRNA(Glu) in a two-step reaction: glutamate is first activated by ATP to form Glu-AMP and then transferred to the acceptor end of tRNA(Glu). This is Glutamate--tRNA ligase from Xanthomonas axonopodis pv. citri (strain 306).